We begin with the raw amino-acid sequence, 210 residues long: Glutathione S-transferase 4 (210 aa).

In terms of domain architecture, GST N-terminal spans 1 to 80 (MDFYYLPLSA…YLVEKYGKQD (80 aa)). Residues S9, 50–52 (HTI), and 64–66 (ESR) each bind glutathione. The GST C-terminal domain occupies 87–208 (CPKKRALINQ…AGALEMKTLI (122 aa)).

This sequence belongs to the GST superfamily. Theta family. As to quaternary structure, homodimer.

It catalyses the reaction RX + glutathione = an S-substituted glutathione + a halide anion + H(+). In terms of biological role, conjugation of reduced glutathione to a wide number of exogenous and endogenous hydrophobic electrophiles. In Musca domestica (House fly), this protein is Glutathione S-transferase 4 (Gst4).